The primary structure comprises 52 residues: MPQMMPMKWFLIYFIYLLIFYLFIMLINSMLIKTKINKETLKIKLKKWNWFW.

Residues 7–27 traverse the membrane as a helical segment; sequence MKWFLIYFIYLLIFYLFIMLI.

This sequence belongs to the ATPase protein 8 family. In terms of assembly, F-type ATPases have 2 components, CF(1) - the catalytic core - and CF(0) - the membrane proton channel.

The protein resides in the mitochondrion membrane. In terms of biological role, mitochondrial membrane ATP synthase (F(1)F(0) ATP synthase or Complex V) produces ATP from ADP in the presence of a proton gradient across the membrane which is generated by electron transport complexes of the respiratory chain. F-type ATPases consist of two structural domains, F(1) - containing the extramembraneous catalytic core and F(0) - containing the membrane proton channel, linked together by a central stalk and a peripheral stalk. During catalysis, ATP synthesis in the catalytic domain of F(1) is coupled via a rotary mechanism of the central stalk subunits to proton translocation. Part of the complex F(0) domain. Minor subunit located with subunit a in the membrane. The protein is ATP synthase protein 8 (mt:ATPase8) of Apis mellifera ligustica (Common honeybee).